A 647-amino-acid polypeptide reads, in one-letter code: Threonine--tRNA ligase (647 aa).

The TGS domain maps to 1–61 (MIKITFPDGA…EEDGSIEIVT (61 aa)). The segment at 240-538 (DHRKLGKELD…LIETYKGAFP (299 aa)) is catalytic. Zn(2+)-binding residues include cysteine 334, histidine 385, and histidine 515.

This sequence belongs to the class-II aminoacyl-tRNA synthetase family. In terms of assembly, homodimer. Zn(2+) serves as cofactor.

Its subcellular location is the cytoplasm. It carries out the reaction tRNA(Thr) + L-threonine + ATP = L-threonyl-tRNA(Thr) + AMP + diphosphate + H(+). Functionally, catalyzes the attachment of threonine to tRNA(Thr) in a two-step reaction: L-threonine is first activated by ATP to form Thr-AMP and then transferred to the acceptor end of tRNA(Thr). Also edits incorrectly charged L-seryl-tRNA(Thr). This chain is Threonine--tRNA ligase, found in Streptococcus agalactiae serotype V (strain ATCC BAA-611 / 2603 V/R).